Reading from the N-terminus, the 203-residue chain is ATP-dependent Clp protease proteolytic subunit (203 aa).

The active-site Nucleophile is serine 107. Histidine 132 is an active-site residue.

This sequence belongs to the peptidase S14 family. As to quaternary structure, fourteen ClpP subunits assemble into 2 heptameric rings which stack back to back to give a disk-like structure with a central cavity, resembling the structure of eukaryotic proteasomes.

The protein localises to the cytoplasm. It carries out the reaction Hydrolysis of proteins to small peptides in the presence of ATP and magnesium. alpha-casein is the usual test substrate. In the absence of ATP, only oligopeptides shorter than five residues are hydrolyzed (such as succinyl-Leu-Tyr-|-NHMec, and Leu-Tyr-Leu-|-Tyr-Trp, in which cleavage of the -Tyr-|-Leu- and -Tyr-|-Trp bonds also occurs).. Its function is as follows. Cleaves peptides in various proteins in a process that requires ATP hydrolysis. Has a chymotrypsin-like activity. Plays a major role in the degradation of misfolded proteins. The chain is ATP-dependent Clp protease proteolytic subunit from Shewanella denitrificans (strain OS217 / ATCC BAA-1090 / DSM 15013).